A 264-amino-acid polypeptide reads, in one-letter code: Glutamate racemase (264 aa).

Substrate-binding positions include 12-13 (DS) and 44-45 (YG). Cys-75 acts as the Proton donor/acceptor in catalysis. 76-77 (NT) contributes to the substrate binding site. The active-site Proton donor/acceptor is the Cys-186. 187 to 188 (TH) is a substrate binding site.

This sequence belongs to the aspartate/glutamate racemases family.

It carries out the reaction L-glutamate = D-glutamate. Its pathway is cell wall biogenesis; peptidoglycan biosynthesis. Its function is as follows. Provides the (R)-glutamate required for cell wall biosynthesis. The sequence is that of Glutamate racemase from Stutzerimonas stutzeri (strain A1501) (Pseudomonas stutzeri).